The sequence spans 253 residues: Indole-3-glycerol phosphate synthase (253 aa).

This sequence belongs to the TrpC family.

It catalyses the reaction 1-(2-carboxyphenylamino)-1-deoxy-D-ribulose 5-phosphate + H(+) = (1S,2R)-1-C-(indol-3-yl)glycerol 3-phosphate + CO2 + H2O. It functions in the pathway amino-acid biosynthesis; L-tryptophan biosynthesis; L-tryptophan from chorismate: step 4/5. The polypeptide is Indole-3-glycerol phosphate synthase (Bacillus cereus (strain ATCC 14579 / DSM 31 / CCUG 7414 / JCM 2152 / NBRC 15305 / NCIMB 9373 / NCTC 2599 / NRRL B-3711)).